A 200-amino-acid polypeptide reads, in one-letter code: Small ribosomal subunit protein mS38 (200 aa).

Belongs to the mitochondrion-specific ribosomal protein mS38 family. Component of the mitochondrial ribosome small subunit (28S) which comprises a 12S rRNA and about 30 distinct proteins. Interacts with Aurora-A. Ubiquitously expressed and especially highly expressed in heart, skeletal muscle and testis.

It is found in the mitochondrion matrix. The protein localises to the nucleus. May act as a negative regulator of Aurora-A kinase, by down-regulation through proteasome-dependent degradation. The sequence is that of Small ribosomal subunit protein mS38 (Aurkaip1) from Mus musculus (Mouse).